The sequence spans 412 residues: MTNYRVESSSGRAARKMRLALMGPAFIAAIGYIDPGNFATNIQAGASFGYQLLWVVVWANLMAMLIQILSAKLGIATGKNLAEQIRDHYPRPVVWFYWVQAEIIAMATDLAEFIGAAIGFKLILGVSLLQGAVLTGIATFLILMLQRRGQKPLEKVIGGLLLFVAAAYIVELIFSQPNLAQLGKGMVIPSLPTSEAVFLAAGVLGATIMPHVIYLHSSLTQHLHGGSRQQRYSATKWDVAIAMTIAGFVNLAMMATAAAAFHFSGHTGVADLDEAYLTLQPLLSHAAATVFGLSLVAAGLSSTVVGTLAGQVVMQGFIRFHIPLWVRRTVTMLPSFIVILMGLDPTRILVMSQVLLSFGIALALVPLLIFTSDSKLMGDLVNSKRVKQTGWVIVVLVVALNIWLLVGTALGL.

Residues 1–19 lie on the Cytoplasmic side of the membrane; that stretch reads MTNYRVESSSGRAARKMRL. The chain crosses the membrane as a helical span at residues 20–39; that stretch reads ALMGPAFIAAIGYIDPGNFA. Topologically, residues 40 to 51 are periplasmic; it reads TNIQAGASFGYQ. Residues 52-71 form a helical membrane-spanning segment; that stretch reads LLWVVVWANLMAMLIQILSA. The Cytoplasmic segment spans residues 72-95; it reads KLGIATGKNLAEQIRDHYPRPVVW. A helical transmembrane segment spans residues 96–118; sequence FYWVQAEIIAMATDLAEFIGAAI. The Periplasmic portion of the chain corresponds to 119–125; that stretch reads GFKLILG. Residues 126 to 145 form a helical membrane-spanning segment; that stretch reads VSLLQGAVLTGIATFLILML. The Cytoplasmic segment spans residues 146–155; sequence QRRGQKPLEK. The chain crosses the membrane as a helical span at residues 156–175; the sequence is VIGGLLLFVAAAYIVELIFS. The Periplasmic segment spans residues 176 to 196; it reads QPNLAQLGKGMVIPSLPTSEA. A helical membrane pass occupies residues 197 to 220; it reads VFLAAGVLGATIMPHVIYLHSSLT. The Cytoplasmic segment spans residues 221–238; that stretch reads QHLHGGSRQQRYSATKWD. A helical membrane pass occupies residues 239 to 258; sequence VAIAMTIAGFVNLAMMATAA. Topologically, residues 259–276 are periplasmic; sequence AAFHFSGHTGVADLDEAY. A helical transmembrane segment spans residues 277 to 297; the sequence is LTLQPLLSHAAATVFGLSLVA. Residues 298-327 are Cytoplasmic-facing; it reads AGLSSTVVGTLAGQVVMQGFIRFHIPLWVR. Residues 328–344 form a helical membrane-spanning segment; that stretch reads RTVTMLPSFIVILMGLD. The Periplasmic segment spans residues 345–350; the sequence is PTRILV. The helical transmembrane segment at 351-370 threads the bilayer; the sequence is MSQVLLSFGIALALVPLLIF. The Cytoplasmic portion of the chain corresponds to 371–387; the sequence is TSDSKLMGDLVNSKRVK. Residues 388-406 traverse the membrane as a helical segment; that stretch reads QTGWVIVVLVVALNIWLLV. Over 407–412 the chain is Periplasmic; sequence GTALGL.

It belongs to the NRAMP family.

The protein resides in the cell inner membrane. In terms of biological role, h(+)-stimulated, divalent metal cation uptake system. The protein is Divalent metal cation transporter MntH of Escherichia fergusonii (strain ATCC 35469 / DSM 13698 / CCUG 18766 / IAM 14443 / JCM 21226 / LMG 7866 / NBRC 102419 / NCTC 12128 / CDC 0568-73).